Consider the following 304-residue polypeptide: 3-diazoavenalumate denitrifying reductase (304 aa).

This sequence belongs to the NAD(P)-dependent epimerase/dehydratase family.

The catalysed reaction is 3-diazoavenalumate + NADPH + H(+) = avenalumate + N2 + NADP(+). The enzyme catalyses 3-diazoavenalumate + NADH + H(+) = avenalumate + N2 + NAD(+). It carries out the reaction (E)-3-diazocoumarate + NADPH = N2 + (E)-4-coumarate + NADP(+). It catalyses the reaction (E)-3-diazocoumarate + NADH = N2 + (E)-4-coumarate + NAD(+). Its function is as follows. Oxidoreductase involved in the biosynthesis of avenalumic acid (AVA). Catalyzes the denitrification of 3-diazoavenalumic acid (3-DAA) to produce AVA. It can also act on 3-diazocoumaric acid (3-DCA). Can use NADPH or NADH as a reductant, with a preference for NADPH. This Streptomyces sp protein is 3-diazoavenalumate denitrifying reductase.